The following is a 247-amino-acid chain: Protein LIFEGUARD 4 (247 aa).

7 helical membrane-spanning segments follow: residues 42–62 (VYSI…TVVF), 75–95 (AGLA…CPLY), 105–125 (YLLL…TCAF), 130–150 (VILE…VYTF), 165–185 (FLFG…FFPL), 188–208 (ISVM…IVYD), and 222–242 (IWAA…LLTI).

It belongs to the BI1 family.

It localises to the membrane. This is Protein LIFEGUARD 4 from Arabidopsis thaliana (Mouse-ear cress).